The chain runs to 598 residues: Dihydroxy-acid dehydratase astD, mitochondrial (598 aa).

Residues 1–111 constitute a mitochondrion transit peptide; sequence MFASRIRSRA…HRAGLVPMRF (111 aa). The segment at 23–50 is disordered; that stretch reads RLPASTTGRRYKSDETLNRVSSKITQPK. Residues 40–50 are compositionally biased toward polar residues; that stretch reads NRVSSKITQPK. Cys86 contacts [2Fe-2S] cluster. Residue Asp118 participates in Mg(2+) binding. Residue Cys159 participates in [2Fe-2S] cluster binding. Residue Asp160 coordinates Mg(2+). Position 232 (Cys232) interacts with [2Fe-2S] cluster. Glu485 is a binding site for Mg(2+). The Proton acceptor role is filled by Ser511.

This sequence belongs to the IlvD/Edd family. Requires [2Fe-2S] cluster as cofactor. The cofactor is Mg(2+).

The protein localises to the mitochondrion. It carries out the reaction (2R)-2,3-dihydroxy-3-methylbutanoate = 3-methyl-2-oxobutanoate + H2O. It catalyses the reaction (2R,3R)-2,3-dihydroxy-3-methylpentanoate = (S)-3-methyl-2-oxopentanoate + H2O. The protein operates within amino-acid biosynthesis; L-isoleucine biosynthesis; L-isoleucine from 2-oxobutanoate: step 3/4. It functions in the pathway amino-acid biosynthesis; L-valine biosynthesis; L-valine from pyruvate: step 3/4. Its activity is regulated as follows. DHAD activity is not inhibited by the dihydroxyacid dehydratase inhibitor aspterric acid (AA). Dihydroxyacid dehydratase; part of the gene cluster that mediates the biosynthesis of the sesquiterpenoid aspterric acid (AA), an inhibitor of dihydroxy-acid dehydratase (DHAD) effective as an herbicide. Performs the third step in the common pathway leading to biosynthesis of branched-chain amino acids. Catalyzes the dehydration of (2R,3R)-2,3-dihydroxy-3-methylpentanoate (2,3-dihydroxy-3-methylvalerate) into 2-oxo-3-methylpentanoate (2-oxo-3-methylvalerate) and of (2R)-2,3-dihydroxy-3-methylbutanoate (2,3-dihydroxyisovalerate) into 2-oxo-3-methylbutanoate (2-oxoisovalerate), the penultimate precursor to L-isoleucine and L-valine, respectively. AstD confers self-resistance in the presence of the dihydroxyacid dehydratase inhibitor aspterric acid (AA) produced by the ast cluster. The sequence is that of Dihydroxy-acid dehydratase astD, mitochondrial from Aspergillus terreus (strain NIH 2624 / FGSC A1156).